The primary structure comprises 122 residues: Small ribosomal subunit protein uS13 (122 aa).

Positions 98-122 are disordered; sequence VRGQKTKSNARTRKGPRPSRIKKKK. Residues 101 to 122 are compositionally biased toward basic residues; it reads QKTKSNARTRKGPRPSRIKKKK.

This sequence belongs to the universal ribosomal protein uS13 family. In terms of assembly, part of the 30S ribosomal subunit. Forms a loose heterodimer with protein S19. Forms two bridges to the 50S subunit in the 70S ribosome.

In terms of biological role, located at the top of the head of the 30S subunit, it contacts several helices of the 16S rRNA. In the 70S ribosome it contacts the 23S rRNA (bridge B1a) and protein L5 of the 50S subunit (bridge B1b), connecting the 2 subunits; these bridges are implicated in subunit movement. Contacts the tRNAs in the A and P-sites. In Thermosipho africanus (strain TCF52B), this protein is Small ribosomal subunit protein uS13.